Consider the following 148-residue polypeptide: Putative pre-16S rRNA nuclease (148 aa).

This sequence belongs to the YqgF nuclease family.

The protein localises to the cytoplasm. In terms of biological role, could be a nuclease involved in processing of the 5'-end of pre-16S rRNA. This is Putative pre-16S rRNA nuclease from Chlamydia trachomatis serovar A (strain ATCC VR-571B / DSM 19440 / HAR-13).